The primary structure comprises 198 residues: Segregation and condensation protein B (198 aa).

It belongs to the ScpB family. As to quaternary structure, homodimer. Homodimerization may be required to stabilize the binding of ScpA to the Smc head domains. Component of a cohesin-like complex composed of ScpA, ScpB and the Smc homodimer, in which ScpA and ScpB bind to the head domain of Smc. The presence of the three proteins is required for the association of the complex with DNA.

The protein resides in the cytoplasm. Its function is as follows. Participates in chromosomal partition during cell division. May act via the formation of a condensin-like complex containing Smc and ScpA that pull DNA away from mid-cell into both cell halves. This is Segregation and condensation protein B from Streptococcus mutans serotype c (strain ATCC 700610 / UA159).